The sequence spans 515 residues: Chromosomal replication initiator protein DnaA (515 aa).

Residues 1–89 (MVADQAVLSS…LLAISIDANL (89 aa)) are domain I, interacts with DnaA modulators. The segment at 89-172 (LQPPRTPSSE…APPSTSAETS (84 aa)) is domain II. Disordered stretches follow at residues 90–130 (QPPR…SRRA) and 142–171 (PPAD…SAET). 2 stretches are compositionally biased toward low complexity: residues 102 to 114 (SSLA…AAAP) and 143 to 160 (PADV…NGKP). The tract at residues 173–389 (RLNDRYHFET…GALIRVTAFA (217 aa)) is domain III, AAA+ region. The ATP site is built by glycine 217, glycine 219, lysine 220, and threonine 221. Residues 390–515 (SLNRQTVDIE…NEIKRKQRGA (126 aa)) are domain IV, binds dsDNA.

This sequence belongs to the DnaA family. Oligomerizes as a right-handed, spiral filament on DNA at oriC.

Its subcellular location is the cytoplasm. Functionally, plays an essential role in the initiation and regulation of chromosomal replication. ATP-DnaA binds to the origin of replication (oriC) to initiate formation of the DNA replication initiation complex once per cell cycle. Binds the DnaA box (a 9 base pair repeat at the origin) and separates the double-stranded (ds)DNA. Forms a right-handed helical filament on oriC DNA; dsDNA binds to the exterior of the filament while single-stranded (ss)DNA is stabiized in the filament's interior. The ATP-DnaA-oriC complex binds and stabilizes one strand of the AT-rich DNA unwinding element (DUE), permitting loading of DNA polymerase. After initiation quickly degrades to an ADP-DnaA complex that is not apt for DNA replication. Binds acidic phospholipids. The chain is Chromosomal replication initiator protein DnaA from Micrococcus luteus (strain ATCC 4698 / DSM 20030 / JCM 1464 / CCM 169 / CCUG 5858 / IAM 1056 / NBRC 3333 / NCIMB 9278 / NCTC 2665 / VKM Ac-2230) (Micrococcus lysodeikticus).